Consider the following 141-residue polypeptide: Nucleoside diphosphate kinase (141 aa).

Positions 11, 59, 87, 93, 104, and 114 each coordinate ATP. Histidine 117 (pros-phosphohistidine intermediate) is an active-site residue.

It belongs to the NDK family. Homotetramer. Mg(2+) is required as a cofactor.

Its subcellular location is the cytoplasm. The enzyme catalyses a 2'-deoxyribonucleoside 5'-diphosphate + ATP = a 2'-deoxyribonucleoside 5'-triphosphate + ADP. It carries out the reaction a ribonucleoside 5'-diphosphate + ATP = a ribonucleoside 5'-triphosphate + ADP. In terms of biological role, major role in the synthesis of nucleoside triphosphates other than ATP. The ATP gamma phosphate is transferred to the NDP beta phosphate via a ping-pong mechanism, using a phosphorylated active-site intermediate. In Paracidovorax citrulli (strain AAC00-1) (Acidovorax citrulli), this protein is Nucleoside diphosphate kinase.